The primary structure comprises 56 residues: Large ribosomal subunit protein bL32 (56 aa).

Positions 1–36 (MAVQQNKKSRSKRGMRRSHDALSTAQLSVDATSGEV) are disordered. Residues 7 to 16 (KKSRSKRGMR) show a composition bias toward basic residues. The span at 21–31 (ALSTAQLSVDA) shows a compositional bias: polar residues.

The protein belongs to the bacterial ribosomal protein bL32 family.

The polypeptide is Large ribosomal subunit protein bL32 (Shewanella oneidensis (strain ATCC 700550 / JCM 31522 / CIP 106686 / LMG 19005 / NCIMB 14063 / MR-1)).